A 647-amino-acid polypeptide reads, in one-letter code: Leishmanolysin-like peptidase (647 aa).

Zn(2+) is bound at residue H264. The active site involves E265. Residues H268 and H370 each contribute to the Zn(2+) site.

The protein belongs to the peptidase M8 family. Requires Zn(2+) as cofactor. In terms of tissue distribution, expressed in all cell lines analyzed.

Its subcellular location is the cytoplasm. The protein resides in the lipid droplet. Its function is as follows. Metalloprotease. This Homo sapiens (Human) protein is Leishmanolysin-like peptidase (LMLN).